We begin with the raw amino-acid sequence, 136 residues long: Holo-[acyl-carrier-protein] synthase (136 aa).

Mg(2+)-binding residues include D8 and E57.

This sequence belongs to the P-Pant transferase superfamily. AcpS family. It depends on Mg(2+) as a cofactor.

The protein localises to the cytoplasm. The catalysed reaction is apo-[ACP] + CoA = holo-[ACP] + adenosine 3',5'-bisphosphate + H(+). Its function is as follows. Transfers the 4'-phosphopantetheine moiety from coenzyme A to a Ser of acyl-carrier-protein. This is Holo-[acyl-carrier-protein] synthase from Methylorubrum extorquens (strain CM4 / NCIMB 13688) (Methylobacterium extorquens).